Reading from the N-terminus, the 364-residue chain is D-alanine--D-alanine ligase A (364 aa).

An ATP-grasp domain is found at 145–348 (KRLLRDAGLN…YTDLITRLIE (204 aa)). 175–230 (ESKLGLPLFVKPANQGSSVGVSKVTSEEQYTIAVDLAFEFDHKVIVEQGIKGREIE) lines the ATP pocket. Residues Asp302, Glu315, and Asn317 each coordinate Mg(2+).

The protein belongs to the D-alanine--D-alanine ligase family. Mg(2+) serves as cofactor. Requires Mn(2+) as cofactor.

Its subcellular location is the cytoplasm. It catalyses the reaction 2 D-alanine + ATP = D-alanyl-D-alanine + ADP + phosphate + H(+). The protein operates within cell wall biogenesis; peptidoglycan biosynthesis. Functionally, cell wall formation. This is D-alanine--D-alanine ligase A from Escherichia coli O6:H1 (strain CFT073 / ATCC 700928 / UPEC).